We begin with the raw amino-acid sequence, 193 residues long: Peptidyl-tRNA hydrolase (193 aa).

Tyrosine 18 contacts tRNA. The active-site Proton acceptor is histidine 23. 3 residues coordinate tRNA: phenylalanine 69, asparagine 71, and asparagine 117.

It belongs to the PTH family. As to quaternary structure, monomer.

The protein localises to the cytoplasm. The catalysed reaction is an N-acyl-L-alpha-aminoacyl-tRNA + H2O = an N-acyl-L-amino acid + a tRNA + H(+). Functionally, hydrolyzes ribosome-free peptidyl-tRNAs (with 1 or more amino acids incorporated), which drop off the ribosome during protein synthesis, or as a result of ribosome stalling. Catalyzes the release of premature peptidyl moieties from peptidyl-tRNA molecules trapped in stalled 50S ribosomal subunits, and thus maintains levels of free tRNAs and 50S ribosomes. In Teredinibacter turnerae (strain ATCC 39867 / T7901), this protein is Peptidyl-tRNA hydrolase.